We begin with the raw amino-acid sequence, 408 residues long: FAD-dependent monooxygenase nscC (408 aa).

A signal peptide spans 1–20; the sequence is MASRLPILIIGAGISGLTTA. 2 residues coordinate FAD: Glu34 and Ala45. Residues Asn91 and Asn103 are each glycosylated (N-linked (GlcNAc...) asparagine). An FAD-binding site is contributed by Arg119. 2 N-linked (GlcNAc...) asparagine glycosylation sites follow: Asn170 and Asn231. Residues Asp328 and Gly341 each coordinate FAD.

The protein belongs to the paxM FAD-dependent monooxygenase family. The cofactor is FAD.

It participates in secondary metabolite biosynthesis. Functionally, FAD-dependent monooxygenase; part of the gene cluster that mediates the biosynthesis of neosartoricin, a prenylated anthracenone that exhibits T-cell antiproliferative activity, suggestive of a physiological role as an immunosuppressive agent. The non-reducing polyketide synthase nscA probably synthesizes and cyclizes the decaketide backbone. The hydrolase nscB then mediates the product release through hydrolysis followed by spontaneous decarboxylation. The prenyltransferase nscD catalyzes the addition of the dimethylallyl group to the aromatic C5. The FAD-dependent monooxygenase nscC is then responsible for the stereospecific hydroxylation at C2. There is no gene encoding O-acetyltransferase in the nsc gene cluster; thus, the last step of 2-O-acetylation leading to neosartoricin may be catalyzed by an unidentified O-acetyltransferase. The chain is FAD-dependent monooxygenase nscC from Aspergillus fumigatus (strain ATCC MYA-4609 / CBS 101355 / FGSC A1100 / Af293) (Neosartorya fumigata).